The sequence spans 185 residues: Threonylcarbamoyl-AMP synthase (185 aa).

The 182-residue stretch at 4-185 (SWRVQQAARE…LATGEVVRPG (182 aa)) folds into the YrdC-like domain.

Belongs to the SUA5 family. TsaC subfamily.

It localises to the cytoplasm. It catalyses the reaction L-threonine + hydrogencarbonate + ATP = L-threonylcarbamoyladenylate + diphosphate + H2O. Required for the formation of a threonylcarbamoyl group on adenosine at position 37 (t(6)A37) in tRNAs that read codons beginning with adenine. Catalyzes the conversion of L-threonine, HCO(3)(-)/CO(2) and ATP to give threonylcarbamoyl-AMP (TC-AMP) as the acyladenylate intermediate, with the release of diphosphate. In Pseudomonas entomophila (strain L48), this protein is Threonylcarbamoyl-AMP synthase.